A 119-amino-acid polypeptide reads, in one-letter code: Holo-[acyl-carrier-protein] synthase (119 aa).

Mg(2+) is bound by residues Asp-8 and Glu-59.

The protein belongs to the P-Pant transferase superfamily. AcpS family. Mg(2+) serves as cofactor.

Its subcellular location is the cytoplasm. The catalysed reaction is apo-[ACP] + CoA = holo-[ACP] + adenosine 3',5'-bisphosphate + H(+). Its function is as follows. Transfers the 4'-phosphopantetheine moiety from coenzyme A to a Ser of acyl-carrier-protein. This is Holo-[acyl-carrier-protein] synthase from Lactococcus lactis subsp. cremoris (strain SK11).